Reading from the N-terminus, the 400-residue chain is F-box/kelch-repeat protein At4g19870 (400 aa).

A compositionally biased stretch (basic and acidic residues) spans 1–10 (MKRQAKPPEK). Residues 1-33 (MKRQAKPPEKKTKRTTNASSPTPSSSSPSLSSL) are disordered. A compositionally biased stretch (low complexity) spans 19 to 33 (SSPTPSSSSPSLSSL). The F-box domain occupies 27-73 (SPSLSSLPDEIVENCLARISRSYYPTLSIVSKSFRSIISSTELYVAR). 3 Kelch repeats span residues 146-192 (EIYV…LYDG), 194-240 (IYVI…RIAE), and 242-284 (EGKI…SVLY).

This chain is F-box/kelch-repeat protein At4g19870, found in Arabidopsis thaliana (Mouse-ear cress).